The chain runs to 160 residues: Transcriptional repressor NrdR (160 aa).

Residues 1 to 11 (MRCPSCNSLDT) are compositionally biased toward polar residues. The segment at 1–20 (MRCPSCNSLDTQVKDSRPTE) is disordered. Residues 3–34 (CPSCNSLDTQVKDSRPTEDSAVIRRRRVCMAC) fold into a zinc finger. The 91-residue stretch at 49 to 139 (LTVIKRNGRR…VYRNFREAKD (91 aa)) folds into the ATP-cone domain.

Belongs to the NrdR family. Requires Zn(2+) as cofactor.

In terms of biological role, negatively regulates transcription of bacterial ribonucleotide reductase nrd genes and operons by binding to NrdR-boxes. The chain is Transcriptional repressor NrdR from Nitrobacter hamburgensis (strain DSM 10229 / NCIMB 13809 / X14).